The following is a 70-amino-acid chain: Frenatin 4.1 (70 aa).

The first 22 residues, 1–22 (MAFLKKSLFLVLFLGLVNLSIC), serve as a signal peptide directing secretion. The propeptide occupies 23–46 (EEEKREEENKEEEDENEALSEVKR). K68 carries the post-translational modification Lysine amide.

This sequence belongs to the frog skin active peptide (FSAP) family. Frenatin subfamily. Expressed by the skin glands.

The protein resides in the secreted. Its subcellular location is the target cell membrane. In terms of biological role, peptide with unknown function. Does not show antimicrobial activity against S.aureus (MIC&gt;512 ug/mL), E.coli (MIC&gt;512 ug/mL) and C.albicans (MIC&gt;512 ug/mL). Does not show hemolytic activity. Antimicrobial peptide with activity against E.coli (MIC=128 ug/mL or 54 uM) and C.albicans (MIC=256 ug/mL or 108 uM). Does not show activity against S.aureus (MIC&gt;512 ug/mL). Does not show hemolytic activity. This chain is Frenatin 4.1, found in Nyctimystes infrafrenatus (White-lipped tree frog).